A 129-amino-acid chain; its full sequence is uncharacterized protein (129 aa).

The N-terminal stretch at 1 to 27 is a signal peptide; sequence MLMRKKKLLSRISFGSLFLLCGTILSA. C28 carries the N-palmitoyl cysteine lipid modification. C28 is lipidated: S-diacylglycerol cysteine.

This sequence belongs to the MG439/MG440 family.

The protein localises to the cell membrane. This is an uncharacterized protein from Mycoplasma pneumoniae (strain ATCC 29342 / M129 / Subtype 1) (Mycoplasmoides pneumoniae).